The chain runs to 206 residues: Large ribosomal subunit protein uL4 (206 aa).

Residues 43-94 (ARSGNRAQKDREQVKHTTKKPWRQKGTGRARAGMSSSPLWRGGGRIFPNSPE) form a disordered region. Residues 58–70 (HTTKKPWRQKGTG) show a composition bias toward basic residues.

It belongs to the universal ribosomal protein uL4 family. Part of the 50S ribosomal subunit.

In terms of biological role, one of the primary rRNA binding proteins, this protein initially binds near the 5'-end of the 23S rRNA. It is important during the early stages of 50S assembly. It makes multiple contacts with different domains of the 23S rRNA in the assembled 50S subunit and ribosome. Its function is as follows. Forms part of the polypeptide exit tunnel. The protein is Large ribosomal subunit protein uL4 of Polynucleobacter asymbioticus (strain DSM 18221 / CIP 109841 / QLW-P1DMWA-1) (Polynucleobacter necessarius subsp. asymbioticus).